Reading from the N-terminus, the 101-residue chain is MAKQSMKAREVKRVALADKYFAKRAELKAIISDVNATDEDRWNAVLKLQTLPRDSSPSRQRNRCRQTGRPHAFLRKFGLSRIKVREAAMRGEIPGLKKASW.

Belongs to the universal ribosomal protein uS14 family. As to quaternary structure, part of the 30S ribosomal subunit. Contacts proteins S3 and S10.

In terms of biological role, binds 16S rRNA, required for the assembly of 30S particles and may also be responsible for determining the conformation of the 16S rRNA at the A site. This chain is Small ribosomal subunit protein uS14, found in Salmonella schwarzengrund (strain CVM19633).